The sequence spans 499 residues: Interferon regulatory factor 5 (499 aa).

The short motif at 12-18 (PRRVRLK) is the Nuclear localization signal element. A DNA-binding region (IRF tryptophan pentad repeat) is located at residues 14-122 (RVRLKPWLVA…QPYKVYEVCS (109 aa)). Positions 121-142 (CSNGPAPAESQPSEDNAEEEEE) are disordered. The Nuclear export signal motif lies at 145–155 (LQKMLPGLSIT). Ser153 and Ser294 each carry phosphoserine; by TBK1. Ser302 carries the phosphoserine modification. Glycyl lysine isopeptide (Lys-Gly) (interchain with G-Cter in ubiquitin) cross-links involve residues Lys412 and Lys413. Phosphoserine is present on residues Ser432, Ser436, Ser438, Ser441, and Ser447.

Belongs to the IRF family. As to quaternary structure, homodimer, when phosphorylated. Interacts with TASL (via pLxIS motif); interaction takes place downstream of TLR7, TLR8 or TLR9, leading to its activation. Interacts with MYD88 and TRAF6. Post-translationally, phosphorylation of serine and threonine residues by IKBKB in a C-terminal autoinhibitory region, stimulates dimerization, transport into the nucleus, assembly with the coactivator CBP/EP300 and initiation of transcription. In terms of processing, 'Lys-63'-linked polyubiquitination by TRAF6 is required for activation.

It localises to the cytoplasm. Its subcellular location is the nucleus. Maintained as a monomer in an autoinhibited state. Phosphorylation and activation follow the following steps: innate adapter protein TASL recruits IRF5, thereby licensing IRF5 for phosphorylation by IKBKB. Phosphorylated IRF5 dissociates from the adapter proteins, dimerizes, and then enters the nucleus to induce IFNs. Functionally, transcription factor that plays a critical role in innate immunity by activating expression of type I interferon (IFN) IFNA and INFB and inflammatory cytokines downstream of endolysosomal toll-like receptors TLR7, TLR8 and TLR9. Regulates the transcription of type I IFN genes (IFN-alpha and IFN-beta) and IFN-stimulated genes (ISG) by binding to an interferon-stimulated response element (ISRE) in their promoters. Can efficiently activate both the IFN-beta (IFNB) and the IFN-alpha (IFNA) genes and mediate their induction downstream of the TLR-activated, MyD88-dependent pathway. The sequence is that of Interferon regulatory factor 5 from Bos taurus (Bovine).